The chain runs to 95 residues: Sec-independent protein translocase protein TatA (95 aa).

A helical membrane pass occupies residues 1 to 21 (MFGRLGAPEIILILVVIILLF). Positions 44–55 (AKAMKSEAKADD) are enriched in basic and acidic residues. Positions 44 to 95 (AKAMKSEAKADDAAPADPPNPEQSAAQRTIQAAPGDVTSSRPVTEPTDTTKR) are disordered.

The protein belongs to the TatA/E family. The Tat system comprises two distinct complexes: a TatABC complex, containing multiple copies of TatA, TatB and TatC subunits, and a separate TatA complex, containing only TatA subunits. Substrates initially bind to the TatABC complex, which probably triggers association of the separate TatA complex to form the active translocon.

It is found in the cell membrane. Its function is as follows. Part of the twin-arginine translocation (Tat) system that transports large folded proteins containing a characteristic twin-arginine motif in their signal peptide across membranes. TatA could form the protein-conducting channel of the Tat system. In Streptomyces coelicolor (strain ATCC BAA-471 / A3(2) / M145), this protein is Sec-independent protein translocase protein TatA.